A 206-amino-acid chain; its full sequence is RNA pyrophosphohydrolase (206 aa).

The 144-residue stretch at 6-149 (GYRPNVGIVL…KRGVYARALR (144 aa)) folds into the Nudix hydrolase domain. The short motif at 38–59 (GGMNTDETPVEAMYRELQEETG) is the Nudix box element. Positions 175 to 206 (MPGHTAGHDRPRKRPRSRGYWPKKAQGDVPPT) are disordered.

The protein belongs to the Nudix hydrolase family. RppH subfamily. It depends on a divalent metal cation as a cofactor.

Functionally, accelerates the degradation of transcripts by removing pyrophosphate from the 5'-end of triphosphorylated RNA, leading to a more labile monophosphorylated state that can stimulate subsequent ribonuclease cleavage. This Stenotrophomonas maltophilia (strain R551-3) protein is RNA pyrophosphohydrolase.